Consider the following 435-residue polypeptide: ATP-dependent protease ATPase subunit HslU (435 aa).

Residues Ile18, 60 to 65, Asp248, Glu313, and Arg385 contribute to the ATP site; that span reads GVGKTE.

The protein belongs to the ClpX chaperone family. HslU subfamily. A double ring-shaped homohexamer of HslV is capped on each side by a ring-shaped HslU homohexamer. The assembly of the HslU/HslV complex is dependent on binding of ATP.

Its subcellular location is the cytoplasm. Its function is as follows. ATPase subunit of a proteasome-like degradation complex; this subunit has chaperone activity. The binding of ATP and its subsequent hydrolysis by HslU are essential for unfolding of protein substrates subsequently hydrolyzed by HslV. HslU recognizes the N-terminal part of its protein substrates and unfolds these before they are guided to HslV for hydrolysis. In Rhizobium meliloti (strain 1021) (Ensifer meliloti), this protein is ATP-dependent protease ATPase subunit HslU.